The sequence spans 282 residues: 4-diphosphocytidyl-2-C-methyl-D-erythritol kinase (282 aa).

Residue Lys15 is part of the active site. 98 to 108 (PMGGGVGGGSS) serves as a coordination point for ATP. Asp140 is a catalytic residue.

Belongs to the GHMP kinase family. IspE subfamily.

The enzyme catalyses 4-CDP-2-C-methyl-D-erythritol + ATP = 4-CDP-2-C-methyl-D-erythritol 2-phosphate + ADP + H(+). The protein operates within isoprenoid biosynthesis; isopentenyl diphosphate biosynthesis via DXP pathway; isopentenyl diphosphate from 1-deoxy-D-xylulose 5-phosphate: step 3/6. Its function is as follows. Catalyzes the phosphorylation of the position 2 hydroxy group of 4-diphosphocytidyl-2C-methyl-D-erythritol. The sequence is that of 4-diphosphocytidyl-2-C-methyl-D-erythritol kinase from Azoarcus sp. (strain BH72).